Here is a 585-residue protein sequence, read N- to C-terminus: Arginine--tRNA ligase (585 aa).

The 'HIGH' region motif lies at 130–140; sequence ANPTGPMHVGH.

The protein belongs to the class-I aminoacyl-tRNA synthetase family. As to quaternary structure, monomer.

The protein resides in the cytoplasm. The enzyme catalyses tRNA(Arg) + L-arginine + ATP = L-arginyl-tRNA(Arg) + AMP + diphosphate. This Methylorubrum extorquens (strain CM4 / NCIMB 13688) (Methylobacterium extorquens) protein is Arginine--tRNA ligase.